Here is a 661-residue protein sequence, read N- to C-terminus: Probable potassium transport system protein Kup 1 (661 aa).

Residues 1-11 show a composition bias toward gly residues; that stretch reads MKGLFPAGGGN. The disordered stretch occupies residues 1–38; sequence MKGLFPAGGGNPPSSYLSRFLPHRKERSPENVTSGRNG. 12 helical membrane passes run 48–68, 85–105, 139–159, 177–197, 207–227, 251–271, 286–306, 324–344, 384–404, 405–425, 436–456, and 458–478; these read LALG…LYTI, IMGV…IKYI, AVVV…GFIT, AAKN…FLVQ, IFGP…LLCI, VHGL…EALY, WFAM…AALL, LLLP…QAMI, LMMV…GLAG, AYGV…FFVA, TAPL…SNLL, and FFDG…VMAS.

This sequence belongs to the HAK/KUP transporter (TC 2.A.72) family.

The protein resides in the cell inner membrane. It catalyses the reaction K(+)(in) + H(+)(in) = K(+)(out) + H(+)(out). Its function is as follows. Transport of potassium into the cell. Likely operates as a K(+):H(+) symporter. This Syntrophobacter fumaroxidans (strain DSM 10017 / MPOB) protein is Probable potassium transport system protein Kup 1.